The primary structure comprises 351 residues: Nicotinate-nucleotide--dimethylbenzimidazole phosphoribosyltransferase (351 aa).

Glu318 (proton acceptor) is an active-site residue.

Belongs to the CobT family.

It carries out the reaction 5,6-dimethylbenzimidazole + nicotinate beta-D-ribonucleotide = alpha-ribazole 5'-phosphate + nicotinate + H(+). The protein operates within nucleoside biosynthesis; alpha-ribazole biosynthesis; alpha-ribazole from 5,6-dimethylbenzimidazole: step 1/2. Its function is as follows. Catalyzes the synthesis of alpha-ribazole-5'-phosphate from nicotinate mononucleotide (NAMN) and 5,6-dimethylbenzimidazole (DMB). This chain is Nicotinate-nucleotide--dimethylbenzimidazole phosphoribosyltransferase, found in Chloroflexus aurantiacus (strain ATCC 29366 / DSM 635 / J-10-fl).